Reading from the N-terminus, the 450-residue chain is Phosphoglucosamine mutase (450 aa).

Serine 102 (phosphoserine intermediate) is an active-site residue. 4 residues coordinate Mg(2+): serine 102, aspartate 244, aspartate 246, and aspartate 248. Phosphoserine is present on serine 102.

The protein belongs to the phosphohexose mutase family. Mg(2+) is required as a cofactor. Activated by phosphorylation.

It catalyses the reaction alpha-D-glucosamine 1-phosphate = D-glucosamine 6-phosphate. Catalyzes the conversion of glucosamine-6-phosphate to glucosamine-1-phosphate. This is Phosphoglucosamine mutase from Desulfovibrio desulfuricans (strain ATCC 27774 / DSM 6949 / MB).